The chain runs to 474 residues: 3-isopropylmalate dehydratase large subunit (474 aa).

The [4Fe-4S] cluster site is built by Cys-355, Cys-415, and Cys-418.

Belongs to the aconitase/IPM isomerase family. LeuC type 1 subfamily. In terms of assembly, heterodimer of LeuC and LeuD. Requires [4Fe-4S] cluster as cofactor.

It carries out the reaction (2R,3S)-3-isopropylmalate = (2S)-2-isopropylmalate. Its pathway is amino-acid biosynthesis; L-leucine biosynthesis; L-leucine from 3-methyl-2-oxobutanoate: step 2/4. Catalyzes the isomerization between 2-isopropylmalate and 3-isopropylmalate, via the formation of 2-isopropylmaleate. The protein is 3-isopropylmalate dehydratase large subunit of Shewanella putrefaciens (strain CN-32 / ATCC BAA-453).